Here is a 358-residue protein sequence, read N- to C-terminus: Transcription factor PCF6 (358 aa).

A disordered region spans residues M1–M29. Over residues D7 to G16 the composition is skewed to gly residues. Positions G52–L110 constitute a TCP domain. 2 disordered regions span residues A127 to V163 and A282 to Q308. 2 stretches are compositionally biased toward polar residues: residues L143–S156 and G285–S296.

As to quaternary structure, forms homodimers and heterodimers.

Its subcellular location is the nucleus. Functionally, transcription activator. Binds the promoter core sequence 5'-GGNCC-3'. The chain is Transcription factor PCF6 (PCF6) from Oryza sativa subsp. indica (Rice).